The following is a 196-amino-acid chain: Carnitine operon protein CaiE (196 aa).

Residues 177–196 (RQMEENRPRLQGTTDVMPKR) are disordered.

It belongs to the transferase hexapeptide repeat family.

The protein operates within amine and polyamine metabolism; carnitine metabolism. Overproduction of CaiE stimulates the activity of CaiB and CaiD. This Escherichia coli O17:K52:H18 (strain UMN026 / ExPEC) protein is Carnitine operon protein CaiE.